The chain runs to 558 residues: Potassium-transporting ATPase potassium-binding subunit 1 (558 aa).

Helical transmembrane passes span M1–L21, F66–L86, M127–A147, I166–M186, I245–L265, A281–W301, F327–V347, L354–G374, V377–V397, I416–M436, I482–I502, and I531–I551.

This sequence belongs to the KdpA family. As to quaternary structure, the system is composed of three essential subunits: KdpA, KdpB and KdpC.

It localises to the cell membrane. Functionally, part of the high-affinity ATP-driven potassium transport (or Kdp) system, which catalyzes the hydrolysis of ATP coupled with the electrogenic transport of potassium into the cytoplasm. This subunit binds the extracellular potassium ions and delivers the ions to the membrane domain of KdpB through an intramembrane tunnel. The polypeptide is Potassium-transporting ATPase potassium-binding subunit 1 (Staphylococcus aureus (strain Mu50 / ATCC 700699)).